A 184-amino-acid polypeptide reads, in one-letter code: Ribosome-recycling factor (184 aa).

It belongs to the RRF family.

The protein localises to the cytoplasm. Its function is as follows. Responsible for the release of ribosomes from messenger RNA at the termination of protein biosynthesis. May increase the efficiency of translation by recycling ribosomes from one round of translation to another. This Staphylococcus carnosus (strain TM300) protein is Ribosome-recycling factor.